The sequence spans 889 residues: DNA gyrase subunit A (889 aa).

Residues 35–501 (LPDVRDGLKP…GFEDLEDEDL (467 aa)) enclose the Topo IIA-type catalytic domain. The O-(5'-phospho-DNA)-tyrosine intermediate role is filled by tyrosine 123. Residues 528–534 (QNRGGRG) carry the GyrA-box motif. Residues 811 to 889 (KEDAEDETNE…IQQSSDEDEE (79 aa)) are disordered. The segment covering 813–823 (DAEDETNEDEQ) has biased composition (acidic residues). Over residues 863-875 (DGRIEVRQDFMDR) the composition is skewed to basic and acidic residues. Positions 876–889 (VEEDIQQSSDEDEE) are enriched in acidic residues.

Belongs to the type II topoisomerase GyrA/ParC subunit family. As to quaternary structure, heterotetramer, composed of two GyrA and two GyrB chains. In the heterotetramer, GyrA contains the active site tyrosine that forms a transient covalent intermediate with DNA, while GyrB binds cofactors and catalyzes ATP hydrolysis.

It localises to the cytoplasm. The catalysed reaction is ATP-dependent breakage, passage and rejoining of double-stranded DNA.. A type II topoisomerase that negatively supercoils closed circular double-stranded (ds) DNA in an ATP-dependent manner to modulate DNA topology and maintain chromosomes in an underwound state. Negative supercoiling favors strand separation, and DNA replication, transcription, recombination and repair, all of which involve strand separation. Also able to catalyze the interconversion of other topological isomers of dsDNA rings, including catenanes and knotted rings. Type II topoisomerases break and join 2 DNA strands simultaneously in an ATP-dependent manner. This chain is DNA gyrase subunit A, found in Staphylococcus aureus (strain Mu50 / ATCC 700699).